A 295-amino-acid chain; its full sequence is 5'-adenylylsulfate reductase-like 6 (295 aa).

Residues 1 to 22 (MEKKLTLLLLVVVVLFVNLTNA) form the signal peptide. A Thioredoxin domain is found at 23–161 (TVRVQICPRE…LVAFYTDVTG (139 aa)). N136 carries an N-linked (GlcNAc...) asparagine glycan. The chain crosses the membrane as a helical span at residues 208 to 228 (ATVFVLLRLLHLISPTMVVFV).

It is found in the membrane. This is 5'-adenylylsulfate reductase-like 6 (APRL6) from Arabidopsis thaliana (Mouse-ear cress).